A 97-amino-acid chain; its full sequence is Integration host factor subunit alpha (97 aa).

It belongs to the bacterial histone-like protein family. In terms of assembly, heterodimer of an alpha and a beta chain.

Functionally, this protein is one of the two subunits of integration host factor, a specific DNA-binding protein that functions in genetic recombination as well as in transcriptional and translational control. The sequence is that of Integration host factor subunit alpha from Colwellia psychrerythraea (strain 34H / ATCC BAA-681) (Vibrio psychroerythus).